The chain runs to 125 residues: Secreted RxLR effector protein RXLR-C13 (125 aa).

A signal peptide spans 1-23 (MVNSLTFTLVVVCLVRSCDGVAA). Positions 43 to 73 (RVLQETATANDDVKKLSTSTKVDSKLNQEIK) match the RxLR-dEER motif. Asparagine 85 is a glycosylation site (N-linked (GlcNAc...) asparagine). Residues 106 to 123 (FFILATILLFPIAAYMVA) traverse the membrane as a helical segment.

This sequence belongs to the RxLR effector family.

It localises to the secreted. The protein localises to the host endoplasmic reticulum membrane. Its function is as follows. Secreted effector that does not suppress pattern-triggered immunity (PTI) in plant host. This chain is Secreted RxLR effector protein RXLR-C13, found in Plasmopara halstedii (Downy mildew of sunflower).